The sequence spans 157 residues: Protein E6 (157 aa).

Zinc fingers lie at residues 39 to 75 and 112 to 148; these read CNFC…CRSC and CQTC…CRQC.

This sequence belongs to the papillomaviridae E6 protein family. As to quaternary structure, forms homodimers. Interacts with ubiquitin-protein ligase UBE3A/E6-AP; this interaction stimulates UBE3A ubiquitin activity. Interacts with host BAK1.

The protein resides in the host cytoplasm. It is found in the host nucleus. Plays a major role in the induction and maintenance of cellular transformation. E6 associates with host UBE3A/E6-AP ubiquitin-protein ligase and modulates its activity. Protects host keratinocytes from apoptosis by mediating the degradation of host BAK1. May also inhibit host immune response. The chain is Protein E6 from Homo sapiens (Human).